A 294-amino-acid polypeptide reads, in one-letter code: Beta-lactamase (294 aa).

A signal peptide spans 1–30 (MKHSSLRRSLLLAGITLPLVSFALPAWANA). The active-site Acyl-ester intermediate is the S75. Position 239 to 241 (239 to 241 (KTG)) interacts with substrate.

Belongs to the class-A beta-lactamase family.

It catalyses the reaction a beta-lactam + H2O = a substituted beta-amino acid. The polypeptide is Beta-lactamase (blaA) (Yersinia enterocolitica).